Consider the following 480-residue polypeptide: Glycogen synthase (480 aa).

Residue lysine 15 participates in ADP-alpha-D-glucose binding.

The protein belongs to the glycosyltransferase 1 family. Bacterial/plant glycogen synthase subfamily.

The enzyme catalyses [(1-&gt;4)-alpha-D-glucosyl](n) + ADP-alpha-D-glucose = [(1-&gt;4)-alpha-D-glucosyl](n+1) + ADP + H(+). The protein operates within glycan biosynthesis; glycogen biosynthesis. Synthesizes alpha-1,4-glucan chains using ADP-glucose. In Granulibacter bethesdensis (strain ATCC BAA-1260 / CGDNIH1), this protein is Glycogen synthase.